A 235-amino-acid chain; its full sequence is tRNA (guanine-N(1)-)-methyltransferase (235 aa).

Residues Gly-112 and 132 to 137 (IGDYVI) each bind S-adenosyl-L-methionine.

The protein belongs to the RNA methyltransferase TrmD family. As to quaternary structure, homodimer.

The protein localises to the cytoplasm. The enzyme catalyses guanosine(37) in tRNA + S-adenosyl-L-methionine = N(1)-methylguanosine(37) in tRNA + S-adenosyl-L-homocysteine + H(+). Its function is as follows. Specifically methylates guanosine-37 in various tRNAs. This is tRNA (guanine-N(1)-)-methyltransferase from Anaplasma marginale (strain Florida).